A 61-amino-acid chain; its full sequence is Metallothionein-1F (61 aa).

M1 bears the N-acetylmethionine mark. Positions 1 to 29 (MDPNCSCPTGGSCTCAGSCTCKACRCTSC) are beta. 18 residues coordinate a divalent metal cation: C5, C7, C13, C15, C19, C21, C24, C26, C29, C33, C34, C36, C37, C41, C44, C48, C50, and C57. An alpha region spans residues 30–61 (KKSCCSCCPAGCAKCAQGCICKGASDKCSCCA). The residue at position 58 (S58) is a Phosphoserine. C59 and C60 together coordinate a divalent metal cation.

The protein belongs to the metallothionein superfamily. Type 1 family. Monomer.

Metallothioneins have a high content of cysteine residues that bind various heavy metals; these proteins are transcriptionally regulated by both heavy metals and glucocorticoids. The sequence is that of Metallothionein-1F (MT1F) from Sus scrofa (Pig).